We begin with the raw amino-acid sequence, 206 residues long: Pro-glucagon (206 aa).

The first 22 residues, 1 to 22, serve as a signal peptide directing secretion; sequence MKMKSIYFIAGLLLMIVQGSWQ. Residues 27–57 form a disordered region; that stretch reads DTEEKSRSFKASQSEPLDESRQLNEVKRHSQ. The segment covering 44–54 has biased composition (basic and acidic residues); sequence DESRQLNEVKR. Positions 86–109 are excised as a propeptide; that stretch reads NGQQGQEDKENDKFPDQLSSNAIS. Arginine 147 carries the arginine amide modification. 2 consecutive propeptides follow at residues 151–163 and 199–206; these read DFPE…EEMG and RDLLGEYQ.

It belongs to the glucagon family. Post-translationally, proglucagon is post-translationally processed in a tissue-specific manner in pancreatic A cells and intestinal L cells. In pancreatic A cells, the major bioactive hormone is glucagon cleaved by PCSK2/PC2. In the intestinal L cells PCSK1/PC1 liberates GLP-1 and GLP-2. GLP-1 is further N-terminally truncated by post-translational processing in the intestinal L cells resulting in GLP-1(7-37) GLP-1-(7-36)amide.

It is found in the secreted. Plays a key role in glucose metabolism and homeostasis. Regulates blood glucose by increasing gluconeogenesis and decreasing glycolysis. Functionally, potent stimulator of glucose-dependent insulin release. Plays important roles on gastric motility and the suppression of plasma glucagon levels. May be involved in the suppression of satiety and stimulation of glucose disposal in peripheral tissues, independent of the actions of insulin. Has growth-promoting activities on intestinal epithelium. May also regulate the hypothalamic pituitary axis (HPA) via effects on LH, TSH, CRH, oxytocin, and vasopressin secretion. Increases islet mass through stimulation of islet neogenesis and pancreatic beta cell proliferation. In terms of biological role, stimulates intestinal growth and up-regulates villus height in the small intestine, concomitant with increased crypt cell proliferation and decreased enterocyte apoptosis. The gastrointestinal tract, from the stomach to the colon is the principal target for GLP-2 action. Plays a key role in nutrient homeostasis, enhancing nutrient assimilation through enhanced gastrointestinal function, as well as increasing nutrient disposal. Stimulates intestinal glucose transport and decreases mucosal permeability. This chain is Pro-glucagon (GCG), found in Gallus gallus (Chicken).